Here is a 326-residue protein sequence, read N- to C-terminus: Beta-ketoacyl-[acyl-carrier-protein] synthase III (326 aa).

Residues Cys115 and His253 contribute to the active site. Residues 254 to 258 (QANKR) are ACP-binding. Asn283 is a catalytic residue.

The protein belongs to the thiolase-like superfamily. FabH family. Homodimer.

It localises to the cytoplasm. It catalyses the reaction malonyl-[ACP] + acetyl-CoA + H(+) = 3-oxobutanoyl-[ACP] + CO2 + CoA. It functions in the pathway lipid metabolism; fatty acid biosynthesis. Functionally, catalyzes the condensation reaction of fatty acid synthesis by the addition to an acyl acceptor of two carbons from malonyl-ACP. Catalyzes the first condensation reaction which initiates fatty acid synthesis and may therefore play a role in governing the total rate of fatty acid production. Possesses both acetoacetyl-ACP synthase and acetyl transacylase activities. Its substrate specificity determines the biosynthesis of branched-chain and/or straight-chain of fatty acids. This is Beta-ketoacyl-[acyl-carrier-protein] synthase III from Bradyrhizobium diazoefficiens (strain JCM 10833 / BCRC 13528 / IAM 13628 / NBRC 14792 / USDA 110).